The primary structure comprises 589 residues: Proline--tRNA ligase (589 aa).

The protein belongs to the class-II aminoacyl-tRNA synthetase family. ProS type 1 subfamily. Homodimer.

The protein resides in the cytoplasm. The enzyme catalyses tRNA(Pro) + L-proline + ATP = L-prolyl-tRNA(Pro) + AMP + diphosphate. In terms of biological role, catalyzes the attachment of proline to tRNA(Pro) in a two-step reaction: proline is first activated by ATP to form Pro-AMP and then transferred to the acceptor end of tRNA(Pro). As ProRS can inadvertently accommodate and process non-cognate amino acids such as alanine and cysteine, to avoid such errors it has two additional distinct editing activities against alanine. One activity is designated as 'pretransfer' editing and involves the tRNA(Pro)-independent hydrolysis of activated Ala-AMP. The other activity is designated 'posttransfer' editing and involves deacylation of mischarged Ala-tRNA(Pro). The misacylated Cys-tRNA(Pro) is not edited by ProRS. The sequence is that of Proline--tRNA ligase from Nocardioides sp. (strain ATCC BAA-499 / JS614).